Reading from the N-terminus, the 96-residue chain is CRISPR-associated endoribonuclease Cas2 (96 aa).

Residue D8 coordinates Mg(2+).

The protein belongs to the CRISPR-associated endoribonuclease Cas2 protein family. Homodimer, forms a heterotetramer with a Cas1 homodimer. The cofactor is Mg(2+).

CRISPR (clustered regularly interspaced short palindromic repeat), is an adaptive immune system that provides protection against mobile genetic elements (viruses, transposable elements and conjugative plasmids). CRISPR clusters contain sequences complementary to antecedent mobile elements and target invading nucleic acids. CRISPR clusters are transcribed and processed into CRISPR RNA (crRNA). Functions as a ssRNA-specific endoribonuclease. Involved in the integration of spacer DNA into the CRISPR cassette. The polypeptide is CRISPR-associated endoribonuclease Cas2 (Chlorobaculum tepidum (strain ATCC 49652 / DSM 12025 / NBRC 103806 / TLS) (Chlorobium tepidum)).